The chain runs to 349 residues: Hydroxymethylglutaryl-CoA synthase (349 aa).

Residues aspartate 29 and alanine 30 each contribute to the (3S)-3-hydroxy-3-methylglutaryl-CoA site. Residue glutamate 81 is the Proton donor/acceptor of the active site. Residues cysteine 113 and threonine 154 each contribute to the (3S)-3-hydroxy-3-methylglutaryl-CoA site. Residue cysteine 113 is the Acyl-thioester intermediate of the active site. CoA is bound at residue arginine 202. Threonine 204 and histidine 237 together coordinate (3S)-3-hydroxy-3-methylglutaryl-CoA. Histidine 237 functions as the Proton donor/acceptor in the catalytic mechanism. Lysine 242 is a binding site for CoA. Arginine 246, asparagine 269, and serine 299 together coordinate (3S)-3-hydroxy-3-methylglutaryl-CoA.

Belongs to the thiolase-like superfamily. Archaeal HMG-CoA synthase family. Interacts with acetoacetyl-CoA thiolase that catalyzes the precedent step in the pathway and with a DUF35 protein. The acetoacetyl-CoA thiolase/HMG-CoA synthase complex channels the intermediate via a fused CoA-binding site, which allows for efficient coupling of the endergonic thiolase reaction with the exergonic HMGCS reaction.

The catalysed reaction is acetoacetyl-CoA + acetyl-CoA + H2O = (3S)-3-hydroxy-3-methylglutaryl-CoA + CoA + H(+). Its pathway is metabolic intermediate biosynthesis; (R)-mevalonate biosynthesis; (R)-mevalonate from acetyl-CoA: step 2/3. Its function is as follows. Catalyzes the condensation of acetyl-CoA with acetoacetyl-CoA to form 3-hydroxy-3-methylglutaryl-CoA (HMG-CoA). Functions in the mevalonate (MVA) pathway leading to isopentenyl diphosphate (IPP), a key precursor for the biosynthesis of isoprenoid compounds that are building blocks of archaeal membrane lipids. The protein is Hydroxymethylglutaryl-CoA synthase of Methanococcoides burtonii (strain DSM 6242 / NBRC 107633 / OCM 468 / ACE-M).